The following is a 346-amino-acid chain: Phenylalanine--tRNA ligase alpha subunit (346 aa).

Position 258 (Glu-258) interacts with Mg(2+).

It belongs to the class-II aminoacyl-tRNA synthetase family. Phe-tRNA synthetase alpha subunit type 1 subfamily. Tetramer of two alpha and two beta subunits. It depends on Mg(2+) as a cofactor.

The protein resides in the cytoplasm. The catalysed reaction is tRNA(Phe) + L-phenylalanine + ATP = L-phenylalanyl-tRNA(Phe) + AMP + diphosphate + H(+). The chain is Phenylalanine--tRNA ligase alpha subunit from Protochlamydia amoebophila (strain UWE25).